The following is a 546-amino-acid chain: Chaperonin GroEL 2 (546 aa).

ATP contacts are provided by residues 29–32 (TLGP), 86–90 (DGTTT), G418, 482–484 (NAA), and D498.

Belongs to the chaperonin (HSP60) family. Forms a cylinder of 14 subunits composed of two heptameric rings stacked back-to-back. Interacts with the co-chaperonin GroES.

Its subcellular location is the cytoplasm. The catalysed reaction is ATP + H2O + a folded polypeptide = ADP + phosphate + an unfolded polypeptide.. In terms of biological role, together with its co-chaperonin GroES, plays an essential role in assisting protein folding. The GroEL-GroES system forms a nano-cage that allows encapsulation of the non-native substrate proteins and provides a physical environment optimized to promote and accelerate protein folding. This Corynebacterium diphtheriae (strain ATCC 700971 / NCTC 13129 / Biotype gravis) protein is Chaperonin GroEL 2.